The primary structure comprises 108 residues: MTTEKIDNISVTTQANVYFDGKCISHGITLADGTKKSVGVILPASLTFNTGAAEIMECVAGACEYKLAGSDEWVQSSAGESFSVPGNSKFDIRVAAGFEAYHYICHFA.

The protein belongs to the nucleoside phosphorylase PpnP family.

The enzyme catalyses a purine D-ribonucleoside + phosphate = a purine nucleobase + alpha-D-ribose 1-phosphate. The catalysed reaction is adenosine + phosphate = alpha-D-ribose 1-phosphate + adenine. It catalyses the reaction cytidine + phosphate = cytosine + alpha-D-ribose 1-phosphate. It carries out the reaction guanosine + phosphate = alpha-D-ribose 1-phosphate + guanine. The enzyme catalyses inosine + phosphate = alpha-D-ribose 1-phosphate + hypoxanthine. The catalysed reaction is thymidine + phosphate = 2-deoxy-alpha-D-ribose 1-phosphate + thymine. It catalyses the reaction uridine + phosphate = alpha-D-ribose 1-phosphate + uracil. It carries out the reaction xanthosine + phosphate = alpha-D-ribose 1-phosphate + xanthine. Catalyzes the phosphorolysis of diverse nucleosides, yielding D-ribose 1-phosphate and the respective free bases. Can use uridine, adenosine, guanosine, cytidine, thymidine, inosine and xanthosine as substrates. Also catalyzes the reverse reactions. This chain is Pyrimidine/purine nucleoside phosphorylase, found in Polaromonas naphthalenivorans (strain CJ2).